The following is a 252-amino-acid chain: Hydrolase phiM (252 aa).

Catalysis depends on Ser-126, which acts as the Charge relay system.

The protein belongs to the LovG family.

It functions in the pathway secondary metabolite biosynthesis. Its function is as follows. Hydrolase; part of the gene cluster that mediates the biosynthesis of the antihypercholesterolemic agents phomoidrides which are dimeric anhydrides. Within the pathway, phiM releases the C12-fatty acyl chain from phiA. The pathway begins with the highly reducing polyketide synthase tstA that catalyzes the formation of a C12-fatty acyl-ACP, starting from one acetate and 5 malonate units. The hydrolase tstM is involved in the release of the C12-fatty acyl chain from phiA. The alkylcitrate synthase (ACS) tstJ and the alkylcitrate dehydratase (ACDH) tstI then give rise to decarboxylated monomeric anhydrides by coupling the C12-fatty acyl chain with oxalacetic acid. The cyclase tstC is responsible for the dimerization of the monomeric anhydrides which leads to the production of prephomoidride that contains the characteristic bicyclo[4.3.1]deca-1,6-diene system of phomoidrides. Iterative oxidation catalyzed by the alpha-ketoglutarate-dependent dioxygenase tstK produced then phomoidride A. Finally, the methyltransferase tstE converts phomoidride A to phomoidride B via an acetalization reaction. The phosphatidylethanolamine-binding protein tstB and tstN are not essential for dimerization and their functions have still to be determined. This Talaromyces stipitatus (strain ATCC 10500 / CBS 375.48 / QM 6759 / NRRL 1006) (Penicillium stipitatum) protein is Hydrolase phiM.